The sequence spans 526 residues: NAD(P)H-quinone oxidoreductase subunit 2 (526 aa).

A run of 14 helical transmembrane segments spans residues 16-36 (ILPE…DLIV), 43-63 (WIPY…YLGW), 80-100 (LSIL…MMSV), 107-127 (GTAL…GMFL), 133-153 (LVMI…LTGY), 168-188 (LLIG…LYGL), 211-231 (LALA…ISAV), 245-265 (PTPV…ALAI), 279-299 (WHFI…VVAL), 307-327 (MLAY…VAGT), 335-355 (IFYL…VILF), 379-399 (LGLS…GFFG), 401-421 (IYLF…LGLI), and 469-489 (LVLS…LFVI).

It belongs to the complex I subunit 2 family. As to quaternary structure, NDH-1 can be composed of about 15 different subunits; different subcomplexes with different compositions have been identified which probably have different functions.

The protein resides in the cellular thylakoid membrane. It catalyses the reaction a plastoquinone + NADH + (n+1) H(+)(in) = a plastoquinol + NAD(+) + n H(+)(out). It carries out the reaction a plastoquinone + NADPH + (n+1) H(+)(in) = a plastoquinol + NADP(+) + n H(+)(out). Functionally, NDH-1 shuttles electrons from an unknown electron donor, via FMN and iron-sulfur (Fe-S) centers, to quinones in the respiratory and/or the photosynthetic chain. The immediate electron acceptor for the enzyme in this species is believed to be plastoquinone. Couples the redox reaction to proton translocation, and thus conserves the redox energy in a proton gradient. Cyanobacterial NDH-1 also plays a role in inorganic carbon-concentration. This is NAD(P)H-quinone oxidoreductase subunit 2 from Picosynechococcus sp. (strain ATCC 27264 / PCC 7002 / PR-6) (Agmenellum quadruplicatum).